Reading from the N-terminus, the 72-residue chain is Translation initiation factor IF-1 (72 aa).

In terms of domain architecture, S1-like spans Met-1–Arg-72.

The protein belongs to the IF-1 family. In terms of assembly, component of the 30S ribosomal translation pre-initiation complex which assembles on the 30S ribosome in the order IF-2 and IF-3, IF-1 and N-formylmethionyl-tRNA(fMet); mRNA recruitment can occur at any time during PIC assembly.

The protein resides in the cytoplasm. Functionally, one of the essential components for the initiation of protein synthesis. Stabilizes the binding of IF-2 and IF-3 on the 30S subunit to which N-formylmethionyl-tRNA(fMet) subsequently binds. Helps modulate mRNA selection, yielding the 30S pre-initiation complex (PIC). Upon addition of the 50S ribosomal subunit IF-1, IF-2 and IF-3 are released leaving the mature 70S translation initiation complex. This chain is Translation initiation factor IF-1, found in Psychromonas ingrahamii (strain DSM 17664 / CCUG 51855 / 37).